The primary structure comprises 801 residues: Protein ACCUMULATION AND REPLICATION OF CHLOROPLASTS 6, chloroplastic (801 aa).

The transit peptide at 1 to 67 (MEALSHVGIG…SSSFATATTT (67 aa)) directs the protein to the chloroplast. Over 68–618 (ATLVSPPPSI…ADMLKEASVK (551 aa)) the chain is Stromal. In terms of domain architecture, J spans 89-153 (DFYQVLGAQT…RSRREYNEGL (65 aa)). Residues 619–638 (ILAAGVAIGLISLFSQKYFL) form a helical membrane-spanning segment. The Chloroplast intermembrane segment spans residues 639–801 (KSSSSFQRKD…KITEGSVLAS (163 aa)). Residues 639-801 (KSSSSFQRKD…KITEGSVLAS (163 aa)) are interaction with PDV2.

Self-interacts. Part of a complex made of ARC3, ARC6, FTSZ1 and FTSZ2. Interacts with FTSZ2-1 and FTSZ2-2 (via C-terminus), but not with FTSZ1; this interaction enables ARC3 binding to FTSZ2. Binds to CDT1A. Interacts (via C-terminus) with PDV2 (via C-terminus) in the chloroplast intermembrane space; this interaction induces homodimerization and leads to the formation of a heterotetramer containing two ARC6 and two PDV2 subunits. Interacts with MCD1 in the chloroplast stroma and facilitates its subsequent binding to FtsZ2-1. Interacts (via J domain) with CJD1 (via J-like domain). Mostly expressed in young leaves.

Its subcellular location is the plastid. It localises to the chloroplast inner membrane. Component of the plastid division machinery consisting in a binary fission accomplished by the simultaneous constriction of the FtsZ ring on the stromal side of the inner envelope membrane, and the ARC5 ring on the cytosolic side of the outer envelope membrane. Involved in the initiation of proplastid and plastid division (including chloroplasts, statoliths and leukoplasts). Promotes the assembly and/or stabilization of the plastid-dividing FtsZ ring, functioning as an antagonistic regulator of FtsZ dynamics against CDP1 and facilitating MCD1 positioning to membrane tethered FtsZ filaments to form the chloroplast Z-Ring; inhibits GDP-induced disassembly of FTSZ2 but enables ARC3 binding to FTSZ2-1. Relays plastid division site position between stroma and outer surface via interactions with the stromal FtsZ ring and the outer membrane PDV2 that recruits cytoplasmic ARC5 ring. Required for plastid equatorial positioning of PDV2 and ARC5. May contribute to gravitropism in stems and hypocotyls. Seems to influence stromule (stroma-filled tubular extensions of the plastid envelope membrane) length and frequency. This chain is Protein ACCUMULATION AND REPLICATION OF CHLOROPLASTS 6, chloroplastic, found in Arabidopsis thaliana (Mouse-ear cress).